The sequence spans 216 residues: Somatotropin (216 aa).

Residues 1–25 form the signal peptide; it reads MAPGSWFSPLLIAVVTLGLPQEAAA. Residue histidine 45 participates in Zn(2+) binding. A disulfide bridge connects residues cysteine 78 and cysteine 189. A Zn(2+)-binding site is contributed by glutamate 198. The cysteines at positions 206 and 214 are disulfide-linked.

Belongs to the somatotropin/prolactin family.

Its subcellular location is the secreted. Its function is as follows. Growth hormone plays an important role in growth control. The polypeptide is Somatotropin (GH) (Gallus gallus (Chicken)).